Reading from the N-terminus, the 229-residue chain is Potassium/proton antiporter CemA (229 aa).

A run of 3 helical transmembrane segments spans residues 7–27 (LTPF…SLSF), 106–126 (LILH…YSIL), and 193–213 (LVST…FLFL).

It belongs to the CemA family.

The protein localises to the plastid. It is found in the chloroplast inner membrane. It catalyses the reaction K(+)(in) + H(+)(out) = K(+)(out) + H(+)(in). Functionally, contributes to K(+)/H(+) antiport activity by supporting proton efflux to control proton extrusion and homeostasis in chloroplasts in a light-dependent manner to modulate photosynthesis. Prevents excessive induction of non-photochemical quenching (NPQ) under continuous-light conditions. Indirectly promotes efficient inorganic carbon uptake into chloroplasts. The sequence is that of Potassium/proton antiporter CemA from Illicium oligandrum (Star anise).